The sequence spans 468 residues: Probable soluble pyridine nucleotide transhydrogenase (468 aa).

Residue 33–42 coordinates FAD; it reads ERGRMLGGVC.

Belongs to the class-I pyridine nucleotide-disulfide oxidoreductase family. Requires FAD as cofactor.

Its subcellular location is the cytoplasm. It catalyses the reaction NAD(+) + NADPH = NADH + NADP(+). Functionally, conversion of NADPH, generated by peripheral catabolic pathways, to NADH, which can enter the respiratory chain for energy generation. This Mycobacterium bovis (strain ATCC BAA-935 / AF2122/97) protein is Probable soluble pyridine nucleotide transhydrogenase (sthA).